The following is a 1199-amino-acid chain: Pyruvate-flavodoxin oxidoreductase (1199 aa).

4Fe-4S ferredoxin-type domains follow at residues 699 to 728 (EIPV…AKVY) and 755 to 784 (FTIQ…EPSL). The [4Fe-4S] cluster site is built by C708, C711, C714, C718, C764, C767, C770, C774, C838, C841, C866, and C1103.

It belongs to the pyruvate:ferredoxin/flavodoxin oxidoreductase family. Requires [4Fe-4S] cluster as cofactor.

The enzyme catalyses oxidized [flavodoxin] + pyruvate + CoA + 2 H(+) = reduced [flavodoxin] + acetyl-CoA + CO2. Its function is as follows. Oxidoreductase required for the transfer of electrons from pyruvate to flavodoxin, which reduces nitrogenase. This chain is Pyruvate-flavodoxin oxidoreductase (nifJ), found in Nostoc sp. (strain PCC 7120 / SAG 25.82 / UTEX 2576).